The sequence spans 251 residues: Ribosomal RNA small subunit methyltransferase J (251 aa).

S-adenosyl-L-methionine is bound by residues 100 to 101, 116 to 117, and Asp170; these read RD and ER.

This sequence belongs to the methyltransferase superfamily. RsmJ family.

Its subcellular location is the cytoplasm. The enzyme catalyses guanosine(1516) in 16S rRNA + S-adenosyl-L-methionine = N(2)-methylguanosine(1516) in 16S rRNA + S-adenosyl-L-homocysteine + H(+). Its function is as follows. Specifically methylates the guanosine in position 1516 of 16S rRNA. In Haemophilus ducreyi (strain 35000HP / ATCC 700724), this protein is Ribosomal RNA small subunit methyltransferase J.